The chain runs to 394 residues: Guanine nucleotide-binding protein G(s) subunit alpha isoforms short (394 aa).

The interval 1 to 23 (MGCLGNSKTEDQRNEEKAQREAN) is disordered. Glycine 2 carries the N-palmitoyl glycine lipid modification. Residue cysteine 3 is the site of S-palmitoyl cysteine attachment. A compositionally biased stretch (basic and acidic residues) spans 8-23 (KTEDQRNEEKAQREAN). Positions 39 to 394 (ATHRLLLLGA…RMHLRQYELL (356 aa)) constitute a G-alpha domain. The tract at residues 42 to 55 (RLLLLGAGESGKST) is G1 motif. 47 to 55 (GAGESGKST) is a binding site for GTP. Residue serine 54 participates in Mg(2+) binding. The disordered stretch occupies residues 68-90 (FNGEGGEEDPQAARSNSDGEKAT). Residues 196-204 (DLLRCRVLT) form a G2 motif region. GTP-binding positions include 197–204 (LLRCRVLT), 223–227 (DVGGQ), and 292–295 (NKQD). Threonine 204 serves as a coordination point for Mg(2+). The tract at residues 219-228 (FHMFDVGGQR) is G3 motif. Residues 288–295 (ILFLNKQD) are G4 motif. Residue lysine 300 forms a Glycyl lysine isopeptide (Lys-Gly) (interchain with G-Cter in ubiquitin) linkage. Serine 352 bears the Phosphoserine mark. A G5 motif region spans residues 364–369 (TCAVDT). Alanine 366 is a binding site for GTP.

Belongs to the G-alpha family. G(s) subfamily. Heterotrimeric G proteins are composed of 3 units; alpha, beta and gamma. The alpha chain contains the guanine nucleotide binding site. Component of the TAS2R14-GNAS2 complex, consisting of TAS2R14, GNAS2, GNB1 and GNG2; within the complex interacts with TAS2R14; this complex plays a role in the perception of bitterness. Interacts with CRY1; the interaction may block GPCR-mediated regulation of cAMP concentrations. Interacts with ADCY6 and stimulates its adenylyl cyclase activity. Interacts with ADCY2 and ADCY5. Interacts (GDP-bound form) with RIC8B; promoting GNAS folding and association with the plasma membrane. Stimulates the ADCY5 adenylyl cyclase activity. Interaction with SASH1. Interacts with GASL2L2.

It is found in the cell membrane. It catalyses the reaction GTP + H2O = GDP + phosphate + H(+). Guanine nucleotide-binding proteins (G proteins) function as transducers in numerous signaling pathways controlled by G protein-coupled receptors (GPCRs). The alpha chain contains the guanine nucleotide binding site and alternates between an active, GTP-bound state and an inactive, GDP-bound state. Signaling by an activated GPCR promotes GDP release and GTP binding. The alpha subunit has a low GTPase activity that converts bound GTP to GDP, thereby terminating the signal. Both GDP release and GTP hydrolysis are modulated by numerous regulatory proteins. Signaling involves the activation of adenylyl cyclases, resulting in increased levels of the signaling molecule cAMP. Functions downstream of beta-adrenergic receptors. Stimulates the Ras signaling pathway via RAPGEF2. The sequence is that of Guanine nucleotide-binding protein G(s) subunit alpha isoforms short (Gnas) from Mus musculus (Mouse).